Reading from the N-terminus, the 32-residue chain is Beta-hexosaminidase (32 aa).

One can recognise a GH18 domain in the interval 1–32; that stretch reads GKSSSRPLGDATLGDLDFDIEVTQDYWDDLAR. Catalysis depends on E21, which acts as the Proton donor.

Belongs to the glycosyl hydrolase 18 family. Chitinase class II subfamily.

It carries out the reaction Hydrolysis of terminal non-reducing N-acetyl-D-hexosamine residues in N-acetyl-beta-D-hexosaminides.. With respect to regulation, activity is decreased by HgCl(2) and maltose. Activity is stimulated by Na(2)SeO(4), BaCl(2), MgCl(2), chondroitin 6-sulfate and phenylmethylsulfonyl fluoride. Functionally, preferentially hydrolyzes pNP-GlcNAc, hydrolyzes pNP-GalNAc to a lesser extent. This Palythoa caribaeorum (White encrusting zoanthid coral) protein is Beta-hexosaminidase.